We begin with the raw amino-acid sequence, 37 residues long: Large ribosomal subunit protein bL36 (37 aa).

Belongs to the bacterial ribosomal protein bL36 family.

This is Large ribosomal subunit protein bL36 from Pasteurella multocida (strain Pm70).